The primary structure comprises 573 residues: DNA polymerase lambda (573 aa).

The BRCT domain maps to 35–131 (EARGWLSSLR…RLTDTEGFSL (97 aa)). 2 disordered regions span residues 126 to 204 (TEGF…GPQV) and 214 to 233 (TGHY…APEA). The interval 263–277 (KAYSVQGDKWRALGY) is DNA-binding. Lys-310 functions as the Schiff-base intermediate with DNA in the catalytic mechanism. The tract at residues 343 to 346 (GTKT) is DNA-binding. Residues Arg-384, 415-418 (SYRR), and 424-427 (GDVD) each bind dCTP. The interval 418-427 (RGKMTCGDVD) is involved in primer binding. Mn(2+)-binding residues include Asp-425, Asp-427, and Asp-488. Positions 464–503 (ENGQQQKYLGVCRLPGPGKRHRRLDIIVVPYCEFACALLY) are DNA-binding. Asn-511 provides a ligand contact to dCTP.

This sequence belongs to the DNA polymerase type-X family. As to quaternary structure, interacts with PCNA. Interacts with PAXX; promoting POLL recruitment to double-strand breaks (DSBs) and stimulation of the end-filling activity of POLL. Interacts with XRCC4; promoting POLL recruitment to double-strand breaks (DSBs) and stimulation of the end-filling activity of POLL. Interacts with NHEJ1/XLF; promoting POLL recruitment to double-strand breaks (DSBs) and stimulation of the end-filling activity of POLL. Requires Mn(2+) as cofactor.

It localises to the nucleus. The catalysed reaction is DNA(n) + a 2'-deoxyribonucleoside 5'-triphosphate = DNA(n+1) + diphosphate. In terms of biological role, DNA polymerase that functions in several pathways of DNA repair. Involved in base excision repair (BER) responsible for repair of lesions that give rise to abasic (AP) sites in DNA. Also contributes to DNA double-strand break repair by non-homologous end joining and homologous recombination. Has both template-dependent and template-independent (terminal transferase) DNA polymerase activities. Also has a 5'-deoxyribose-5-phosphate lyase (dRP lyase) activity. The protein is DNA polymerase lambda of Mus musculus (Mouse).